A 376-amino-acid chain; its full sequence is Erythronate-4-phosphate dehydrogenase (376 aa).

Ser45 and Thr67 together coordinate substrate. Asp147 provides a ligand contact to NAD(+). The active site involves Arg209. Asp233 contributes to the NAD(+) binding site. The active site involves Glu238. Residue His255 is the Proton donor of the active site. Residue Gly258 coordinates NAD(+). Tyr259 provides a ligand contact to substrate.

It belongs to the D-isomer specific 2-hydroxyacid dehydrogenase family. PdxB subfamily. Homodimer.

The protein resides in the cytoplasm. It catalyses the reaction 4-phospho-D-erythronate + NAD(+) = (R)-3-hydroxy-2-oxo-4-phosphooxybutanoate + NADH + H(+). It functions in the pathway cofactor biosynthesis; pyridoxine 5'-phosphate biosynthesis; pyridoxine 5'-phosphate from D-erythrose 4-phosphate: step 2/5. In terms of biological role, catalyzes the oxidation of erythronate-4-phosphate to 3-hydroxy-2-oxo-4-phosphonooxybutanoate. The polypeptide is Erythronate-4-phosphate dehydrogenase (Shewanella halifaxensis (strain HAW-EB4)).